Consider the following 29-residue polypeptide: Small ribosomal subunit protein uS7 (29 aa).

The interval 1–29 (ELIGAANRDTKSFSINRKDAKERVAKAAR) is disordered. Residues 8–29 (RDTKSFSINRKDAKERVAKAAR) show a composition bias toward basic and acidic residues.

It belongs to the universal ribosomal protein uS7 family. As to quaternary structure, part of the 30S ribosomal subunit.

One of the primary rRNA binding proteins, it binds directly to 16S rRNA where it nucleates assembly of the head domain of the 30S subunit. Is located at the subunit interface close to the decoding center. The chain is Small ribosomal subunit protein uS7 (rps7) from Methanosarcina thermophila.